Here is a 241-residue protein sequence, read N- to C-terminus: Corrinoid adenosyltransferase MMAB (241 aa).

The transit peptide at 1 to 26 (MAVWGPGGRLGLRGCLGARKLLCPRF) directs the protein to the mitochondrion. The segment at 27-69 (QSRGPQGVEDGDRPQPSSKTPKVPKIYTKTGDKGFSSTFTGER) is disordered. ATP contacts are provided by residues 54–63 (TKTGDKGFSS) and Lys-72. Residue Ser-128 is modified to Phosphoserine. 184–188 (RRAER) is a binding site for ATP. Lys-205 is modified (N6-succinyllysine). Asn-208 serves as a coordination point for ATP. Residue Lys-224 is modified to N6-acetyllysine; alternate. Lys-224 bears the N6-succinyllysine; alternate mark.

This sequence belongs to the Cob(I)alamin adenosyltransferase family. Homotrimer.

The protein resides in the mitochondrion. The catalysed reaction is cob(I)alamin-[corrinoid adenosyltransferase] + ATP = apo-[corrinoid adenosyltransferase] + adenosylcob(III)alamin + triphosphate. Its function is as follows. Converts cob(I)alamin to adenosylcobalamin (adenosylcob(III)alamin), a coenzyme for methylmalonyl-CoA mutase, therefore participates in the final step of the vitamin B12 conversion. Generates adenosylcobalamin (AdoCbl) and directly delivers the cofactor to MUT in a transfer that is stimulated by ATP-binding to MMAB and gated by MMAA. In Bos taurus (Bovine), this protein is Corrinoid adenosyltransferase MMAB.